The following is a 150-amino-acid chain: Catabolic 3-dehydroquinase 1 (150 aa).

The active-site Proton acceptor is the Y24. Residues N75, H81, and D88 each coordinate substrate. The active-site Proton donor is H101. Residues 102–103 (VS) and R112 contribute to the substrate site.

The protein belongs to the type-II 3-dehydroquinase family. In terms of assembly, homododecamer. Adopts a ring-like structure, composed of an arrangement of two hexameric rings stacked on top of one another.

The catalysed reaction is 3-dehydroquinate = 3-dehydroshikimate + H2O. Its pathway is aromatic compound metabolism; 3,4-dihydroxybenzoate biosynthesis; 3,4-dihydroxybenzoate from 3-dehydroquinate: step 1/2. In terms of biological role, is involved in the catabolism of quinate. Allows the utilization of quinate as carbon source via the beta-ketoadipate pathway. In Neosartorya fischeri (strain ATCC 1020 / DSM 3700 / CBS 544.65 / FGSC A1164 / JCM 1740 / NRRL 181 / WB 181) (Aspergillus fischerianus), this protein is Catabolic 3-dehydroquinase 1.